Here is a 128-residue protein sequence, read N- to C-terminus: Fluoride-specific ion channel FluC (128 aa).

4 consecutive transmembrane segments (helical) span residues 10 to 30 (FLAVAIGAALGACARWLAGLW), 40 to 60 (TLLVNLAGGYLIGLALAVLLA), 71 to 91 (AAVTGFLGGLTTFSTFSAETV), and 102 to 122 (ALGYAALSLVGSLALTALGLA). Na(+)-binding residues include glycine 78 and threonine 81.

Belongs to the fluoride channel Fluc/FEX (TC 1.A.43) family.

Its subcellular location is the cell inner membrane. It carries out the reaction fluoride(in) = fluoride(out). Na(+) is not transported, but it plays an essential structural role and its presence is essential for fluoride channel function. Its function is as follows. Fluoride-specific ion channel. Important for reducing fluoride concentration in the cell, thus reducing its toxicity. This Bordetella petrii (strain ATCC BAA-461 / DSM 12804 / CCUG 43448) protein is Fluoride-specific ion channel FluC.